A 364-amino-acid chain; its full sequence is SVP1-like protein 2 (364 aa).

WD repeat units follow at residues 173-213 (AHDS…KICE) and 218-257 (YQHT…NTIR).

This sequence belongs to the WD repeat PROPPIN family.

The protein resides in the vacuole membrane. Its subcellular location is the cytoplasmic vesicle membrane. The protein localises to the preautophagosomal structure membrane. Involved in mitochondrial or peroxisomal functions and amino acid signaling pathways. The sequence is that of SVP1-like protein 2 (hsv2) from Schizosaccharomyces pombe (strain 972 / ATCC 24843) (Fission yeast).